The following is a 397-amino-acid chain: MAKAKFERTKPHVNIGTIGHIDHGKTTLTAAITKVLHDKYPDLNPFTPFDEIDKAPEERQRGITISIAHVEYQTESRHYAHVDCPGHADYIKNMITGAAQMDGAILVVAATDGPMPQTREHVLLARQVGVPALVVALNKCDMVDDEELIELVEMEVRELLSEYEFPGDDIPVVRVAAFPALNGDAKWGESVLELMNAVDEYIPTPERDTEKPFLMPVEDVFTITGRGTVITGRIERGIVKVGEEVEILGIREASQKSTVTGVEMFRKLLDEGQAGENVGLLLRGTKREDVERGMVVAKPGTTTPHTNFEASVYILSKEEGGRHTPFFNNYRPQFYFRTTDVTGVVTLPEGTEMVMPGDNTEMAVELIQPIAMDEGLRFAIREGGRTVGAGRVTKITK.

A tr-type G domain is found at 10 to 206; it reads KPHVNIGTIG…AVDEYIPTPE (197 aa). The segment at 19-26 is G1; sequence GHIDHGKT. 19-26 provides a ligand contact to GTP; that stretch reads GHIDHGKT. T26 contributes to the Mg(2+) binding site. The tract at residues 62–66 is G2; the sequence is GITIS. The tract at residues 83-86 is G3; that stretch reads DCPG. GTP is bound by residues 83-87 and 138-141; these read DCPGH and NKCD. Residues 138–141 are G4; it reads NKCD. The G5 stretch occupies residues 176–178; it reads AAF.

It belongs to the TRAFAC class translation factor GTPase superfamily. Classic translation factor GTPase family. EF-Tu/EF-1A subfamily. As to quaternary structure, monomer.

It localises to the cytoplasm. The enzyme catalyses GTP + H2O = GDP + phosphate + H(+). GTP hydrolase that promotes the GTP-dependent binding of aminoacyl-tRNA to the A-site of ribosomes during protein biosynthesis. The polypeptide is Elongation factor Tu (Nocardioides sp. (strain ATCC BAA-499 / JS614)).